Here is a 157-residue protein sequence, read N- to C-terminus: GDP-mannose mannosyl hydrolase (157 aa).

Substrate is bound by residues 2–3 (FL), Phe-8, and Arg-36. The 151-residue stretch at 3–153 (LRQEDFAAVV…SRAYFSPDAP (151 aa)) folds into the Nudix hydrolase domain. Mg(2+)-binding residues include Gly-49, Glu-69, and Gln-122. Residues 50 to 71 (GRVCKDETLEAAFARLTQAELG) carry the Nudix box motif.

Belongs to the Nudix hydrolase family. In terms of assembly, homodimer. It depends on Mg(2+) as a cofactor.

The catalysed reaction is GDP-alpha-D-mannose + H2O = D-mannose + GDP + H(+). In terms of biological role, hydrolyzes GDP-mannose. The chain is GDP-mannose mannosyl hydrolase from Salmonella typhi.